The chain runs to 199 residues: MVLVTYPAPDFTASAISCNGDIINNFNFKEFTNNQTSILFFWPMDFTFVCPSEIIAFNQELSKFKKRNVKLIGVSIDSVYVHHAWRNTLSHNGQIDKINFTMVSDLKREIQRSYGIEHPQLGVALRATFLIDKNRIIRHQTINDLPFGRNISETLRMIDALHFYEKYGEVCPANWKKGDTGIKTTQEGIHKYLEKISKK.

Positions 2-163 constitute a Thioredoxin domain; sequence VLVTYPAPDF…TLRMIDALHF (162 aa). The Cysteine sulfenic acid (-SOH) intermediate role is filled by Cys-50.

It belongs to the peroxiredoxin family. AhpC/Prx1 subfamily. As to quaternary structure, homodimer; disulfide-linked, upon oxidation. 5 homodimers assemble to form a ring-like decamer.

It localises to the cytoplasm. The catalysed reaction is a hydroperoxide + NADH + H(+) = an alcohol + NAD(+) + H2O. Functionally, thiol-specific peroxidase that catalyzes the reduction of hydrogen peroxide and organic hydroperoxides to water and alcohols, respectively. Plays a role in cell protection against oxidative stress by detoxifying peroxides. The polypeptide is Alkyl hydroperoxide reductase C (Buchnera aphidicola subsp. Baizongia pistaciae (strain Bp)).